Reading from the N-terminus, the 291-residue chain is Protease HtpX homolog (291 aa).

2 helical membrane passes run Ile4 to Leu24 and Ser39 to Ile59. A Zn(2+)-binding site is contributed by His144. Glu145 is a catalytic residue. Residue His148 coordinates Zn(2+). Transmembrane regions (helical) follow at residues Leu159 to Val179 and Val199 to Phe219. Glu224 is a Zn(2+) binding site.

The protein belongs to the peptidase M48B family. Zn(2+) is required as a cofactor.

It localises to the cell inner membrane. The polypeptide is Protease HtpX homolog (Polaromonas naphthalenivorans (strain CJ2)).